A 32-amino-acid chain; its full sequence is Acetolactate synthase, catabolic (32 aa).

Belongs to the TPP enzyme family. In terms of assembly, homodimer.

The catalysed reaction is 2 pyruvate + H(+) = (2S)-2-acetolactate + CO2. It participates in polyol metabolism; (R,R)-butane-2,3-diol biosynthesis; (R,R)-butane-2,3-diol from pyruvate: step 1/3. The chain is Acetolactate synthase, catabolic (budB) from Klebsiella aerogenes (Enterobacter aerogenes).